Here is a 268-residue protein sequence, read N- to C-terminus: Inositol polyphosphate multikinase (268 aa).

Residues lysine 27, 86 to 88, and aspartate 99 each bind ATP; that span reads ENI. 127-135 is a substrate binding site; sequence TSGSLGFRI. Position 235 (aspartate 235) interacts with ATP.

The protein belongs to the inositol phosphokinase (IPK) family.

The protein resides in the cytoplasm. It localises to the nucleus. It catalyses the reaction 1D-myo-inositol 1,4,5-trisphosphate + 2 ATP = 1D-myo-inositol 1,3,4,5,6-pentakisphosphate + 2 ADP + 2 H(+). The catalysed reaction is 1D-myo-inositol 1,4,5-trisphosphate + ATP = 1D-myo-inositol 1,4,5,6-tetrakisphosphate + ADP + H(+). The enzyme catalyses 1D-myo-inositol 1,4,5-trisphosphate + ATP = 1D-myo-inositol 1,3,4,5-tetrakisphosphate + ADP + H(+). It carries out the reaction 1D-myo-inositol 1,4,5,6-tetrakisphosphate + ATP = 1D-myo-inositol 1,3,4,5,6-pentakisphosphate + ADP + H(+). In terms of biological role, inositol phosphate kinase with both monophosphoinositol and diphosphoinositol polyphosphate synthase activities. Able to phosphorylate inositol 1,4,5-trisphosphate (Ins(1,4,5)P3) on both the carbon-3 and carbon-6 positions to synthesize inositol 1,3,4,5-tetrakisphosphate (Ins(1,3,4,5)P4) and inositol 1,4,5,6-tetrakisphosphate (Ins(1,4,5,6)P4), and then to subsequently phosphorylate and convert either isomer of InsP4 to inositol 1,3,4,5,6-pentakisphosphate (Ins(1,3,4,5,6)P5). Also converts (Ins(1,3,4,5,6)P5) to InsP6. Also has a role in transcription regulation. The catalytic activity is required for PHO gene repression by phosphate and for NCR gene activation in response to nitrogen availability, indicating a role for inositol pyrophosphates in these controls. Inositol polyphosphates may be involved in the regulation of chromatin remodeling of transcription. In Schizosaccharomyces pombe (strain 972 / ATCC 24843) (Fission yeast), this protein is Inositol polyphosphate multikinase (arg82).